A 761-amino-acid chain; its full sequence is Putative pentatricopeptide repeat-containing protein At2g02150 (761 aa).

PPR repeat units follow at residues 141-175, 191-225, 226-260, 261-295, 296-330, 331-365, 366-400, 401-435, 436-470, 471-505, 506-540, 541-575, 576-606, 612-646, 647-681, 682-716, and 717-751; these read SVES…KADC, GFGV…RVFP, KTRS…GARP, TVFT…GLVP, DTVT…CCEP, DVIT…GLKP, NVVS…GLVP, NEYT…GVEW, NVVT…GVIP, NLAS…GIKP, DLLL…GIKA, NSLI…DIEV, TVVT…ISND, NAAI…GLVP, DRTA…GMKL, DLLA…GIHP, and DEVL…QLLT.

The protein belongs to the PPR family. P subfamily.

This is Putative pentatricopeptide repeat-containing protein At2g02150 from Arabidopsis thaliana (Mouse-ear cress).